We begin with the raw amino-acid sequence, 58 residues long: MLKITQIRSSIGCIPKHKATLRGLGLRRIGNTVSKIDTPSVRGMINLVLYMIQVKRQD.

The protein belongs to the universal ribosomal protein uL30 family. As to quaternary structure, part of the 50S ribosomal subunit.

In Blochmanniella floridana, this protein is Large ribosomal subunit protein uL30.